We begin with the raw amino-acid sequence, 280 residues long: Elongation factor Ts (280 aa).

Residues 79–82 (TDFV) are involved in Mg(2+) ion dislocation from EF-Tu.

It belongs to the EF-Ts family.

It localises to the cytoplasm. Its function is as follows. Associates with the EF-Tu.GDP complex and induces the exchange of GDP to GTP. It remains bound to the aminoacyl-tRNA.EF-Tu.GTP complex up to the GTP hydrolysis stage on the ribosome. The polypeptide is Elongation factor Ts (Treponema denticola (strain ATCC 35405 / DSM 14222 / CIP 103919 / JCM 8153 / KCTC 15104)).